The primary structure comprises 103 residues: Non-histone chromosomal protein HMG-14B (103 aa).

The interval 1-103 (MPKRKVAASR…AVEKEEVKSE (103 aa)) is disordered. Basic and acidic residues predominate over residues 29 to 50 (VPDKAEPKAKALAAKDKSENKK). Over residues 51–60 (AQSKGKKGPK) the composition is skewed to basic residues. A compositionally biased stretch (basic and acidic residues) spans 94–103 (AVEKEEVKSE).

Belongs to the HMGN family.

The protein resides in the nucleus. In terms of biological role, binds to the inner side of the nucleosomal DNA thus altering the interaction between the DNA and the histone octamer. May be involved in the process which maintains transcribable genes in a unique chromatin conformation. In Gallus gallus (Chicken), this protein is Non-histone chromosomal protein HMG-14B (HMG14).